Here is a 141-residue protein sequence, read N- to C-terminus: Hemoglobin subunit alpha-2 (141 aa).

Residues 1-141 form the Globin domain; sequence VLTDAERKEV…VATVLTSKYR (141 aa). An O2-binding site is contributed by His-58. His-87 contributes to the heme b binding site.

This sequence belongs to the globin family. In terms of assembly, heterotetramer of two alpha chains and two beta chains. Red blood cells.

Functionally, involved in oxygen transport from the lung to the various peripheral tissues. This chain is Hemoglobin subunit alpha-2, found in Tachyglossus aculeatus aculeatus (Southeast Australian short-beaked echidna).